The chain runs to 861 residues: Semaphorin-4D (861 aa).

An N-terminal signal peptide occupies residues 1–23 (MRMCAPVRGLFLALVVVLRTAVA). The Sema domain maps to 24–500 (FAPVPRLTWE…SNSGVVQAPL (477 aa)). The Extracellular portion of the chain corresponds to 24–733 (FAPVPRLTWE…TVYLKSSDNR (710 aa)). N-linked (GlcNAc...) asparagine glycosylation is found at Asn-49 and Asn-77. Disulfide bonds link Cys-97–Cys-108 and Cys-126–Cys-135. N-linked (GlcNAc...) asparagine glycosylation is found at Asn-139 and Asn-191. 2 disulfides stabilise this stretch: Cys-257-Cys-370 and Cys-281-Cys-326. N-linked (GlcNAc...) asparagine glycans are attached at residues Asn-379 and Asn-419. A PSI domain is found at 502–551 (FCEKHGSCEDCVLARDPYCAWSPAIKACVTLHQEEASSRGWIQDMSGDTS). Disulfide bonds link Cys-503-Cys-520, Cys-509-Cys-553, Cys-512-Cys-529, and Cys-576-Cys-624. The region spanning 555–636 (DKSKESFNQH…EERVRNKTVS (82 aa)) is the Ig-like C2-type domain. N-linked (GlcNAc...) asparagine glycans are attached at residues Asn-613 and Asn-632. Residues 649-709 (VPRTPPSPTS…KSSSGTSCEP (61 aa)) form a disordered region. Polar residues predominate over residues 657 to 681 (TSEDAQTEGSKITSKMPVASTQGSS). A helical membrane pass occupies residues 734–754 (LLMSLLLFIFVLFLCLFSYNC). At 755–861 (YKGYLPGQCL…KFADSDADGD (107 aa)) the chain is on the cytoplasmic side. Ser-782 and Ser-832 each carry phosphoserine. The disordered stretch occupies residues 793–839 (VEPGSFSQQNGDHPKPALDTGYETEQDTITSKVPTDREDSQRIDELS). Basic and acidic residues predominate over residues 826–839 (PTDREDSQRIDELS).

The protein belongs to the semaphorin family. Homodimer. Interacts with PLXNB1. Interacts with PLXNB2. Strongly expressed in lymphoid tissues, especially in the thymus, as well as in the nervous tissues. Expressed in neurons and glia in the developing hippocampus.

The protein localises to the cell membrane. Its function is as follows. Cell surface receptor for PLXNB1 and PLXNB2 that plays an important role in cell-cell signaling. Regulates GABAergic synapse development. Promotes the development of inhibitory synapses in a PLXNB1-dependent manner. Modulates the complexity and arborization of developing neurites in hippocampal neurons by activating PLXNB1 and interaction with PLXNB1 mediates activation of RHOA. Promotes the migration of cerebellar granule cells. Plays a role in the immune system; induces B-cells to aggregate and improves their viability (in vitro). Induces endothelial cell migration through the activation of PTK2B/PYK2, SRC, and the phosphatidylinositol 3-kinase-AKT pathway. The sequence is that of Semaphorin-4D (Sema4d) from Mus musculus (Mouse).